Reading from the N-terminus, the 462-residue chain is Retinoic acid receptor RXR-alpha (462 aa).

The disordered stretch occupies residues 1 to 107; that stretch reads MDTKHFLPLD…MNPVSSSEDI (107 aa). The interval 1–134 is modulating; sequence MDTKHFLPLD…GNMASFTKHI (134 aa). A Glycyl lysine isopeptide (Lys-Gly) (interchain with G-Cter in SUMO2) cross-link involves residue K4. Over residues 11–24 the composition is skewed to polar residues; sequence FSTQVNSSLTSPTG. Residues S21 and S27 each carry the phosphoserine modification. The segment covering 49 to 58 has biased composition (polar residues); that stretch reads SPISTLSSPI. 2 positions are modified to phosphoserine; by MAPK8 and MAPK9: S56 and S70. Residues 78-104 are compositionally biased toward polar residues; it reads SVPTTPTLGFSTGSPQLSSPMNPVSSS. Position 82 is a phosphothreonine; by MAPK8 and MAPK9 (T82). K108 participates in a covalent cross-link: Glycyl lysine isopeptide (Lys-Gly) (interchain with G-Cter in SUMO). S129 carries the phosphoserine modification. Positions 135 and 138 each coordinate Zn(2+). The NR C4-type zinc finger occupies 135-155; it reads CAICGDRSSGKHYGVYSCEGC. The nuclear receptor DNA-binding region spans 135–200; the sequence is CAICGDRSSG…RYQKCLAMGM (66 aa). N6-acetyllysine; by EP300 is present on K145. The Zn(2+) site is built by C152 and C155. The nuclear localization signal stretch occupies residues 160-165; it reads KRTVRK. Zn(2+)-binding residues include C171, C177, C187, and C190. Residues 171-195 form an NR C4-type zinc finger; the sequence is CRDNKDCLIDKRQRNRCQYCRYQKC. The interval 201–224 is hinge; the sequence is KREAVQEERQRGKDRNENEVESTS. The span at 206-218 shows a compositional bias: basic and acidic residues; that stretch reads QEERQRGKDRNEN. Positions 206-228 are disordered; that stretch reads QEERQRGKDRNENEVESTSSANE. In terms of domain architecture, NR LBD spans 227–458; sequence NEDMPVERIL…TFLMEMLEAP (232 aa). Residue S259 is modified to Phosphoserine. The residue at position 260 (S260) is a Phosphoserine; by MAPK8 and MAPK9. Residues R316 and A327 each coordinate 9-cis-retinoate. 2 residues coordinate all-trans-retinoate: R316 and A327. The required for nuclear export stretch occupies residues 348 to 368; sequence RVLTELVSKMRDMQMDKTELG.

It belongs to the nuclear hormone receptor family. NR2 subfamily. In terms of assembly, homodimer. Heterodimer (via C-terminus) with RARA; required for ligand-dependent retinoic acid receptor transcriptional activity; association with RARA is enhanced by pulsatile shear stress. Heterodimer with PPARA (via the leucine-like zipper in the LBD); the interaction is required for PPARA transcriptional activity. Heterodimerizes with PPARG. Heterodimerizes (via NR LBD) with RARB. Heterodimerizes with NR1H4; the heterodimerization enhances the binding affinity for LXXLL motifs from coactivators. Interacts with NCOA3 and NCOA6 coactivators. Interacts with coactivator FAM120B. Interacts with coactivator PELP1, SENP6, SFPQ, DNTTIP2 and RNF8. Interacts with PRMT2. Interacts with ASXL1. Interacts with BHLHE40/DEC1, BHLHE41/DEC2, NCOR1 and NCOR2. Interacts in a ligand-dependent fashion with MED1 and NCOA1. Interacts with VDR. Interacts with EP300; the interaction is decreased by 9-cis retinoic acid. Heterodimer (via C-terminus) with NR4A1 (via DNA-binding domain); DNA-binding of the heterodimer is enhanced by 9-cis retinoic acid. NR4A1 competes with EP300 for interaction with RXRA and thereby attenuates EP300 mediated acetylation of RXRA. In the absence of hormonal ligand, interacts with TACC1. Interacts ith IGFBP3. (Microbial infection) Interacts (via the DNA binding domain) with HCV core protein; the interaction enhances the transcriptional activities of the RXRA/RARA and the RXRA/PPARA heterodimers. Acetylated by EP300; acetylation enhances DNA binding and transcriptional activity. Post-translationally, phosphorylated on serine and threonine residues mainly in the N-terminal modulating domain. Constitutively phosphorylated on Ser-21 in the presence or absence of ligand. Under stress conditions, hyperphosphorylated by activated JNK on Ser-56, Ser-70, Thr-82 and Ser-260. Phosphorylated on Ser-27, in vitro, by PKA. This phosphorylation is required for repression of cAMP-mediated transcriptional activity of RARA. In terms of processing, ubiquitinated by UBR5, leading to its degradation: UBR5 specifically recognizes and binds ligand-bound RXRA when it is not associated with coactivators (NCOAs). In presence of NCOAs, the UBR5-degron is not accessible, preventing its ubiquitination and degradation. Sumoylation negatively regulates transcriptional activity. Desumoylated specifically by SENP6. In terms of tissue distribution, expressed in lung fibroblasts (at protein level). Expressed in monocytes. Highly expressed in liver, also found in kidney and brain.

It localises to the nucleus. It is found in the cytoplasm. The protein resides in the mitochondrion. Receptor for retinoic acid that acts as a transcription factor. Forms homo- or heterodimers with retinoic acid receptors (RARs) and binds to target response elements in response to their ligands, all-trans or 9-cis retinoic acid, to regulate gene expression in various biological processes. The RAR/RXR heterodimers bind to the retinoic acid response elements (RARE) composed of tandem 5'-AGGTCA-3' sites known as DR1-DR5 to regulate transcription. The high affinity ligand for retinoid X receptors (RXRs) is 9-cis retinoic acid. In the absence of ligand, the RXR-RAR heterodimers associate with a multiprotein complex containing transcription corepressors that induce histone deacetylation, chromatin condensation and transcriptional suppression. On ligand binding, the corepressors dissociate from the receptors and coactivators are recruited leading to transcriptional activation. Serves as a common heterodimeric partner for a number of nuclear receptors, such as RARA, RARB and PPARA. The RXRA/RARB heterodimer can act as a transcriptional repressor or transcriptional activator, depending on the RARE DNA element context. The RXRA/PPARA heterodimer is required for PPARA transcriptional activity on fatty acid oxidation genes such as ACOX1 and the P450 system genes. Together with RARA, positively regulates microRNA-10a expression, thereby inhibiting the GATA6/VCAM1 signaling response to pulsatile shear stress in vascular endothelial cells. Acts as an enhancer of RARA binding to RARE DNA element. May facilitate the nuclear import of heterodimerization partners such as VDR and NR4A1. Promotes myelin debris phagocytosis and remyelination by macrophages. Plays a role in the attenuation of the innate immune system in response to viral infections, possibly by negatively regulating the transcription of antiviral genes such as type I IFN genes. Involved in the regulation of calcium signaling by repressing ITPR2 gene expression, thereby controlling cellular senescence. The sequence is that of Retinoic acid receptor RXR-alpha (RXRA) from Homo sapiens (Human).